We begin with the raw amino-acid sequence, 62 residues long: Large ribosomal subunit protein bL28 (62 aa).

Belongs to the bacterial ribosomal protein bL28 family.

This is Large ribosomal subunit protein bL28 from Streptococcus thermophilus (strain CNRZ 1066).